The following is a 39-amino-acid chain: Large ribosomal subunit protein bL36 (39 aa).

The protein belongs to the bacterial ribosomal protein bL36 family.

In Levilactobacillus brevis (strain ATCC 367 / BCRC 12310 / CIP 105137 / JCM 1170 / LMG 11437 / NCIMB 947 / NCTC 947) (Lactobacillus brevis), this protein is Large ribosomal subunit protein bL36.